The primary structure comprises 243 residues: NADH-ubiquinone oxidoreductase chain 6 (243 aa).

A run of 5 helical transmembrane segments spans residues 16–36 (ISSV…SVIV), 41–61 (IISV…LILL), 69–89 (AYLI…LMLI), 104–124 (IPLT…LLPY), and 201–221 (IWLF…IVII).

It belongs to the complex I subunit 6 family.

The protein resides in the mitochondrion membrane. It carries out the reaction a ubiquinone + NADH + 5 H(+)(in) = a ubiquinol + NAD(+) + 4 H(+)(out). Core subunit of the mitochondrial membrane respiratory chain NADH dehydrogenase (Complex I) that is believed to belong to the minimal assembly required for catalysis. Complex I functions in the transfer of electrons from NADH to the respiratory chain. The immediate electron acceptor for the enzyme is believed to be ubiquinone. The polypeptide is NADH-ubiquinone oxidoreductase chain 6 (ndh-6) (Neurospora crassa (strain ATCC 24698 / 74-OR23-1A / CBS 708.71 / DSM 1257 / FGSC 987)).